The primary structure comprises 339 residues: ADP,ATP carrier protein (339 aa).

3 Solcar repeats span residues 39-133, 145-234, and 246-328; these read MAFV…IKGL, RFFV…AKGV, and AKWA…IKKF. The next 5 helical transmembrane spans lie at 41–70, 110–134, 144–164, 212–232, and 245–265; these read FVKD…LLLQ, LANV…KGLF, WRFF…SLLI, VSVQ…DTAK, and FAKW…SYPF. ADP contacts are provided by Arg-115 and Lys-127. Arg-269 is a binding site for ADP. Residues 269-274 are important for transport activity; that stretch reads RRRLMM. The Nucleotide carrier signature motif motif lies at 269–274; that stretch reads RRRLMM. The chain crosses the membrane as a helical span at residues 305–322; the sequence is AWSNVLRGAGGAFVLVLY.

It belongs to the mitochondrial carrier (TC 2.A.29) family. In terms of assembly, monomer.

The protein localises to the mitochondrion inner membrane. The catalysed reaction is ADP(in) + ATP(out) = ADP(out) + ATP(in). The matrix-open state (m-state) is inhibited by the membrane-permeable bongkrekic acid (BKA). The cytoplasmic-open state (c-state) is inhibited by the membrane-impermeable toxic inhibitor carboxyatractyloside (CATR). Its function is as follows. ADP:ATP antiporter that mediates import of ADP into the mitochondrial matrix for ATP synthesis, and export of ATP out to fuel the cell. Cycles between the cytoplasmic-open state (c-state) and the matrix-open state (m-state): operates by the alternating access mechanism with a single substrate-binding site intermittently exposed to either the cytosolic (c-state) or matrix (m-state) side of the inner mitochondrial membrane. This chain is ADP,ATP carrier protein, found in Parachlorella kessleri (Green alga).